The chain runs to 195 residues: Peptidyl-tRNA hydrolase (195 aa).

Tyrosine 17 serves as a coordination point for tRNA. Histidine 22 (proton acceptor) is an active-site residue. 3 residues coordinate tRNA: phenylalanine 68, asparagine 70, and asparagine 116.

This sequence belongs to the PTH family. As to quaternary structure, monomer.

It localises to the cytoplasm. The enzyme catalyses an N-acyl-L-alpha-aminoacyl-tRNA + H2O = an N-acyl-L-amino acid + a tRNA + H(+). In terms of biological role, hydrolyzes ribosome-free peptidyl-tRNAs (with 1 or more amino acids incorporated), which drop off the ribosome during protein synthesis, or as a result of ribosome stalling. Functionally, catalyzes the release of premature peptidyl moieties from peptidyl-tRNA molecules trapped in stalled 50S ribosomal subunits, and thus maintains levels of free tRNAs and 50S ribosomes. This chain is Peptidyl-tRNA hydrolase, found in Erwinia tasmaniensis (strain DSM 17950 / CFBP 7177 / CIP 109463 / NCPPB 4357 / Et1/99).